A 239-amino-acid chain; its full sequence is 1-(5-phosphoribosyl)-5-[(5-phosphoribosylamino)methylideneamino] imidazole-4-carboxamide isomerase (239 aa).

D8 (proton acceptor) is an active-site residue. Residue D129 is the Proton donor of the active site.

It belongs to the HisA/HisF family.

The protein resides in the cytoplasm. It catalyses the reaction 1-(5-phospho-beta-D-ribosyl)-5-[(5-phospho-beta-D-ribosylamino)methylideneamino]imidazole-4-carboxamide = 5-[(5-phospho-1-deoxy-D-ribulos-1-ylimino)methylamino]-1-(5-phospho-beta-D-ribosyl)imidazole-4-carboxamide. Its pathway is amino-acid biosynthesis; L-histidine biosynthesis; L-histidine from 5-phospho-alpha-D-ribose 1-diphosphate: step 4/9. The polypeptide is 1-(5-phosphoribosyl)-5-[(5-phosphoribosylamino)methylideneamino] imidazole-4-carboxamide isomerase (Pelagibacter ubique (strain HTCC1062)).